The chain runs to 489 residues: F-box/LRR-repeat protein 7 (489 aa).

The segment covering 1 to 31 (MGANNGKQSGSEGKGSSSISSDLSSSTDQTS) has biased composition (low complexity). The tract at residues 1–76 (MGANNGKQSG…AVLNGSSTSS (76 aa)) is disordered. Over residues 32–55 (TKAPKNAATSEDSDLSMRTVSTPS) the composition is skewed to polar residues. The span at 64 to 76 (SSSAVLNGSSTSS) shows a compositional bias: low complexity. Positions 109–155 (GAPVDILPDHAFLQIFTHLPTNQLCRCARVCRRWYNLAWDPRLWRTI) constitute an F-box domain. LRR repeat units follow at residues 168–193 (LRVL…MVSG), 194–219 (CRRL…EVAG), 220–245 (CYNV…DVSG), 251–279 (CISL…DMTD), 280–305 (CFAL…YLRR), 306–331 (CVRL…SVSD), 332–357 (CRFI…SIAH), 358–383 (CSRI…NARG), 384–409 (CEGL…DIGK), 410–435 (CPLV…SLKS), and 436–461 (CESI…NVQD).

This sequence belongs to the FBXL7 family. Part of the SCF (SKP1-CUL1-F-box) E3 ubiquitin-protein ligase complex SCF(FBXL7).

The protein resides in the cytoplasm. Its subcellular location is the cytoskeleton. The protein localises to the microtubule organizing center. It is found in the centrosome. It participates in protein modification; protein ubiquitination. Substrate recognition component of a SCF (SKP1-CUL1-F-box protein) E3 ubiquitin-protein ligase complex which mediates the ubiquitination and subsequent proteasomal degradation of target proteins. The polypeptide is F-box/LRR-repeat protein 7 (fbxl7) (Danio rerio (Zebrafish)).